Reading from the N-terminus, the 514-residue chain is Coiled-coil domain-containing protein 174 (514 aa).

Disordered regions lie at residues 42 to 83 and 137 to 162; these read AKPK…DQSR and TLEK…PDEE. Residues 63–83 are compositionally biased toward basic and acidic residues; sequence KRAEKDIEQKAEEDQTLDQSR. Residues 66–98 are a coiled coil; it reads EKDIEQKAEEDQTLDQSRKKLEEKAKLYEKMTK. Residues 141-162 are compositionally biased toward acidic residues; it reads ETDDEEIEPEMEIPPPEDPDEE. Coiled coils occupy residues 203–227 and 266–321; these read LLSE…ALRK and LDML…LENG. Disordered regions lie at residues 270–291 and 306–490; these read REQT…KAAL and LREE…PSAH. Composition is skewed to basic and acidic residues over residues 335 to 354 and 376 to 388; these read EVPR…RDTK and KKQE…RDPE. Residues 405 to 418 are compositionally biased toward polar residues; sequence YSSQNLNSPETSPG. Over residues 420-429 the composition is skewed to basic and acidic residues; that stretch reads TEPEISENQK.

The protein localises to the nucleus. Functionally, probably involved in neuronal development. This is Coiled-coil domain-containing protein 174 (CCDC174) from Gallus gallus (Chicken).